The following is a 479-amino-acid chain: tRNA-2-methylthio-N(6)-dimethylallyladenosine synthase (479 aa).

An MTTase N-terminal domain is found at 3–120; sequence KKLYIKTWGC…LPEMVNQVSE (118 aa). Positions 12, 49, 83, 157, 161, and 164 each coordinate [4Fe-4S] cluster. The Radical SAM core domain occupies 143-375; sequence KADGASAFVS…QQRLNQQSMA (233 aa). Residues 378–441 enclose the TRAM domain; the sequence is RRMLETEQRI…PNSLRGELIR (64 aa).

The protein belongs to the methylthiotransferase family. MiaB subfamily. Monomer. The cofactor is [4Fe-4S] cluster.

Its subcellular location is the cytoplasm. The catalysed reaction is N(6)-dimethylallyladenosine(37) in tRNA + (sulfur carrier)-SH + AH2 + 2 S-adenosyl-L-methionine = 2-methylsulfanyl-N(6)-dimethylallyladenosine(37) in tRNA + (sulfur carrier)-H + 5'-deoxyadenosine + L-methionine + A + S-adenosyl-L-homocysteine + 2 H(+). Its function is as follows. Catalyzes the methylthiolation of N6-(dimethylallyl)adenosine (i(6)A), leading to the formation of 2-methylthio-N6-(dimethylallyl)adenosine (ms(2)i(6)A) at position 37 in tRNAs that read codons beginning with uridine. This chain is tRNA-2-methylthio-N(6)-dimethylallyladenosine synthase, found in Idiomarina loihiensis (strain ATCC BAA-735 / DSM 15497 / L2-TR).